Here is an 874-residue protein sequence, read N- to C-terminus: Eukaryotic translation initiation factor 3 subunit C (874 aa).

The interval 1 to 70 (MSRFFVSGYT…DGRPSGPAYF (70 aa)) is disordered. Residues 14-61 (SSEEEDLLSTSEEELLSSSDEGEDNESDSSFFGEDDDESEESSSDDED) show a composition bias toward acidic residues. Residues 598 to 774 (FHQHINLELL…KFISFTSTTE (177 aa)) form the PCI domain. The interval 797-874 (KNEKTQSNGY…SNNDEFQATA (78 aa)) is disordered. Low complexity predominate over residues 813–848 (KDQQNQQQQNQNQNQQQQQNQQQQQQQQSSQQQSNN). The segment covering 862–874 (NVNSNNDEFQATA) has biased composition (polar residues).

It belongs to the eIF-3 subunit C family. As to quaternary structure, component of the eukaryotic translation initiation factor 3 (eIF-3) complex.

The protein resides in the cytoplasm. Component of the eukaryotic translation initiation factor 3 (eIF-3) complex, which is involved in protein synthesis of a specialized repertoire of mRNAs and, together with other initiation factors, stimulates binding of mRNA and methionyl-tRNAi to the 40S ribosome. The eIF-3 complex specifically targets and initiates translation of a subset of mRNAs involved in cell proliferation. In Candida albicans (strain SC5314 / ATCC MYA-2876) (Yeast), this protein is Eukaryotic translation initiation factor 3 subunit C.